The sequence spans 205 residues: Ephrin-A1 (205 aa).

A signal peptide spans 1–17 (MEFLWAPLLGLCCSLAA). The Ephrin RBD domain maps to 18-151 (ADRHIVFWNS…KLKVTVNGKI (134 aa)). N-linked (GlcNAc...) asparagine glycosylation is present at N26. 2 disulfides stabilise this stretch: C51–C92 and C80–C140. S182 carries the GPI-anchor amidated serine lipid modification. The propeptide at 183 to 205 (AAPRLFPLVWAVLLLPLLLLQTQ) is removed in mature form.

The protein belongs to the ephrin family. In terms of assembly, monomer. Homodimer. Forms heterodimers with EPHA2. Binds to the receptor tyrosine kinases EPHA2, EPHA3, EPHA4, EPHA5, EPHA6 and EPHA7. Also binds with low affinity to EPHA1. Post-translationally, undergoes proteolysis by a metalloprotease to give rise to a soluble monomeric form. N-Glycosylation is required for binding to EPHA2 receptor and inducing its internalization.

Its subcellular location is the cell membrane. It is found in the secreted. In terms of biological role, cell surface GPI-bound ligand for Eph receptors, a family of receptor tyrosine kinases which are crucial for migration, repulsion and adhesion during neuronal, vascular and epithelial development. Binds promiscuously Eph receptors residing on adjacent cells, leading to contact-dependent bidirectional signaling into neighboring cells. Plays an important role in angiogenesis and tumor neovascularization. The recruitment of VAV2, VAV3 and PI3-kinase p85 subunit by phosphorylated EPHA2 is critical for EFNA1-induced RAC1 GTPase activation and vascular endothelial cell migration and assembly. Exerts anti-oncogenic effects in tumor cells through activation and down-regulation of EPHA2. Activates EPHA2 by inducing tyrosine phosphorylation which leads to its internalization and degradation. Acts as a negative regulator in the tumorigenesis of gliomas by down-regulating EPHA2 and FAK. Can evoke collapse of embryonic neuronal growth cone and regulates dendritic spine morphogenesis. This Rattus norvegicus (Rat) protein is Ephrin-A1 (Efna1).